A 40-amino-acid polypeptide reads, in one-letter code: Antimicrobial peptide 2 (40 aa).

The Chitin-binding type-1 domain maps to 1–40 (AQCGAQGGGATCPGGLCCSQWGWCGSTPKYCGAGCQSNCR). 4 disulfides stabilise this stretch: C3–C18, C12–C24, C17–C31, and C35–C39.

Post-translationally, not glycosylated.

Functionally, antimicrobial peptide active against plant pathogenic fungi and Gram-negative and -positive bacteria. The protein is Antimicrobial peptide 2 of Fagopyrum esculentum (Common buckwheat).